A 180-amino-acid polypeptide reads, in one-letter code: Inner membrane-spanning protein YciB (180 aa).

A run of 6 helical transmembrane segments spans residues 4 to 24, 25 to 45, 49 to 69, 76 to 96, 118 to 138, and 150 to 170; these read FLSE…GGGI, QHAT…CYVI, VSKL…ITLI, IKIK…MSGI, ITLS…NEVV, and FKVF…LPLL.

It belongs to the YciB family.

The protein localises to the cell inner membrane. Functionally, plays a role in cell envelope biogenesis, maintenance of cell envelope integrity and membrane homeostasis. The protein is Inner membrane-spanning protein YciB of Rickettsia rickettsii (strain Iowa).